Consider the following 275-residue polypeptide: Dermonecrotic toxin LruSicTox-alphaIV1 (275 aa).

Histidine 5 is an active-site residue. Mg(2+) is bound by residues glutamate 25 and aspartate 27. Histidine 41 acts as the Nucleophile in catalysis. Cystine bridges form between cysteine 45/cysteine 51 and cysteine 47/cysteine 192. A Mg(2+)-binding site is contributed by aspartate 85.

It belongs to the arthropod phospholipase D family. Class II subfamily. The cofactor is Mg(2+). As to expression, expressed by the venom gland.

Its subcellular location is the secreted. The catalysed reaction is an N-(acyl)-sphingosylphosphocholine = an N-(acyl)-sphingosyl-1,3-cyclic phosphate + choline. The enzyme catalyses an N-(acyl)-sphingosylphosphoethanolamine = an N-(acyl)-sphingosyl-1,3-cyclic phosphate + ethanolamine. It catalyses the reaction a 1-acyl-sn-glycero-3-phosphocholine = a 1-acyl-sn-glycero-2,3-cyclic phosphate + choline. It carries out the reaction a 1-acyl-sn-glycero-3-phosphoethanolamine = a 1-acyl-sn-glycero-2,3-cyclic phosphate + ethanolamine. Functionally, dermonecrotic toxins cleave the phosphodiester linkage between the phosphate and headgroup of certain phospholipids (sphingolipid and lysolipid substrates), forming an alcohol (often choline) and a cyclic phosphate. This toxin acts on sphingomyelin (SM). It may also act on ceramide phosphoethanolamine (CPE), lysophosphatidylcholine (LPC) and lysophosphatidylethanolamine (LPE), but not on lysophosphatidylserine (LPS), and lysophosphatidylglycerol (LPG). It acts by transphosphatidylation, releasing exclusively cyclic phosphate products as second products. Induces dermonecrosis, hemolysis, increased vascular permeability, edema, inflammatory response, and platelet aggregation. In Loxosceles rufescens (Mediterranean recluse spider), this protein is Dermonecrotic toxin LruSicTox-alphaIV1.